A 236-amino-acid chain; its full sequence is Sugar fermentation stimulation protein homolog (236 aa).

The protein belongs to the SfsA family.

This chain is Sugar fermentation stimulation protein homolog, found in Paramagnetospirillum magneticum (strain ATCC 700264 / AMB-1) (Magnetospirillum magneticum).